The chain runs to 445 residues: Phosphoglucosamine mutase 1 (445 aa).

Residue serine 102 is the Phosphoserine intermediate of the active site. Serine 102, aspartate 241, aspartate 243, and aspartate 245 together coordinate Mg(2+). Residue serine 102 is modified to Phosphoserine.

Belongs to the phosphohexose mutase family. The cofactor is Mg(2+). Activated by phosphorylation.

It catalyses the reaction alpha-D-glucosamine 1-phosphate = D-glucosamine 6-phosphate. In terms of biological role, catalyzes the conversion of glucosamine-6-phosphate to glucosamine-1-phosphate. The protein is Phosphoglucosamine mutase 1 of Shewanella sp. (strain MR-7).